Consider the following 542-residue polypeptide: CTP synthase (542 aa).

Positions 1–265 (MTRYIFVTGG…DQLVIERFGL (265 aa)) are amidoligase domain. Residue Ser-13 coordinates CTP. Ser-13 serves as a coordination point for UTP. Residues 14 to 19 (SLGKGI) and Asp-71 each bind ATP. Residues Asp-71 and Glu-139 each contribute to the Mg(2+) site. CTP is bound by residues 146–148 (DIE), 186–191 (KTKPTQ), and Lys-222. UTP is bound by residues 186 to 191 (KTKPTQ) and Lys-222. A Glutamine amidotransferase type-1 domain is found at 290–541 (TIAMVGKYME…VEAALANKKG (252 aa)). Position 351 (Gly-351) interacts with L-glutamine. Cys-378 serves as the catalytic Nucleophile; for glutamine hydrolysis. L-glutamine-binding positions include 379-382 (LGMQ), Glu-402, and Arg-469. Catalysis depends on residues His-514 and Glu-516.

This sequence belongs to the CTP synthase family. Homotetramer.

It carries out the reaction UTP + L-glutamine + ATP + H2O = CTP + L-glutamate + ADP + phosphate + 2 H(+). The catalysed reaction is L-glutamine + H2O = L-glutamate + NH4(+). The enzyme catalyses UTP + NH4(+) + ATP = CTP + ADP + phosphate + 2 H(+). It functions in the pathway pyrimidine metabolism; CTP biosynthesis via de novo pathway; CTP from UDP: step 2/2. Allosterically activated by GTP, when glutamine is the substrate; GTP has no effect on the reaction when ammonia is the substrate. The allosteric effector GTP functions by stabilizing the protein conformation that binds the tetrahedral intermediate(s) formed during glutamine hydrolysis. Inhibited by the product CTP, via allosteric rather than competitive inhibition. Its function is as follows. Catalyzes the ATP-dependent amination of UTP to CTP with either L-glutamine or ammonia as the source of nitrogen. Regulates intracellular CTP levels through interactions with the four ribonucleotide triphosphates. The chain is CTP synthase from Marinobacter nauticus (strain ATCC 700491 / DSM 11845 / VT8) (Marinobacter aquaeolei).